We begin with the raw amino-acid sequence, 247 residues long: ATP synthase subunit a, chloroplastic (247 aa).

5 helical membrane-spanning segments follow: residues 38–58 (QVLITSWVVITILLGSVVIAV), 95–115 (VPFIGTMFLFIFVSNWSGALL), 134–154 (INTTVALALLTSAAYFYAGLS), 199–219 (LVVVVLVSLVPLVVPIPVMFL), and 220–240 (GLFTSGIQALIFATLAAAYIG).

This sequence belongs to the ATPase A chain family. F-type ATPases have 2 components, CF(1) - the catalytic core - and CF(0) - the membrane proton channel. CF(1) has five subunits: alpha(3), beta(3), gamma(1), delta(1), epsilon(1). CF(0) has four main subunits: a, b, b' and c.

It is found in the plastid. The protein resides in the chloroplast thylakoid membrane. Key component of the proton channel; it plays a direct role in the translocation of protons across the membrane. The chain is ATP synthase subunit a, chloroplastic from Lolium perenne (Perennial ryegrass).